Reading from the N-terminus, the 245-residue chain is Probable histone chaperone asf-1-like protein (245 aa).

Positions 157–166 (EDPVAEPVDE) are enriched in acidic residues. The interval 157-245 (EDPVAEPVDE…SGDVEMGDKH (89 aa)) is disordered. Positions 167 to 183 (EANKVFDEDDLMPLHDD) are enriched in basic and acidic residues. Residues 184 to 206 (GQDDDEEEEDDDETGPNTEEVDL) show a composition bias toward acidic residues. A compositionally biased stretch (basic and acidic residues) spans 215-245 (ANAHDGTEQKNGEESMEHDGASGDVEMGDKH).

This sequence belongs to the ASF1 family. As to quaternary structure, interacts with histone H3 and histone H4.

The protein resides in the nucleus. In terms of biological role, histone chaperone that facilitates histone deposition and histone exchange and removal during nucleosome assembly and disassembly. This Caenorhabditis elegans protein is Probable histone chaperone asf-1-like protein (asfl-1).